Reading from the N-terminus, the 228-residue chain is Cytidylate kinase (228 aa).

Position 17–25 (17–25) interacts with ATP; sequence GPSASGKGT.

The protein belongs to the cytidylate kinase family. Type 1 subfamily.

It localises to the cytoplasm. The catalysed reaction is CMP + ATP = CDP + ADP. The enzyme catalyses dCMP + ATP = dCDP + ADP. This Paraburkholderia phytofirmans (strain DSM 17436 / LMG 22146 / PsJN) (Burkholderia phytofirmans) protein is Cytidylate kinase.